Here is a 304-residue protein sequence, read N- to C-terminus: m7GpppX diphosphatase (304 aa).

Substrate-binding positions include Glu152, Lys174, and His235–His246. A Histidine triad motif motif is present at residues His242–His246. Residue His244 is the Nucleophile of the active site.

It belongs to the HIT family.

The protein localises to the cytoplasm. The protein resides in the nucleus. It catalyses the reaction a 5'-end (N(7)-methyl 5'-triphosphoguanosine)-ribonucleoside in mRNA + H2O = N(7)-methyl-GMP + a 5'-end diphospho-ribonucleoside in mRNA + 2 H(+). Its function is as follows. Decapping scavenger enzyme that catalyzes the cleavage of a residual cap structure following the degradation of mRNAs by the 3'-&gt;5' exosome-mediated mRNA decay pathway. Hydrolyzes cap analog structures like 7-methylguanosine nucleoside triphosphate (m7GpppG) with up to 10 nucleotide substrates (small capped oligoribonucleotides) and specifically releases 5'-phosphorylated RNA fragments and 7-methylguanosine monophosphate (m7GMP). Has no activity towards mRNA molecules longer than 25 nucleotides. May also play a role in the 5'-&gt;3 mRNA decay pathway; m7GDP, the downstream product released by the 5'-&gt;3' mRNA mediated decapping activity, may be also converted by DCS1 to m7GMP. Inhibits mRNA translation. Binds to the m7GpppG cap analog. In Schizosaccharomyces pombe (strain 972 / ATCC 24843) (Fission yeast), this protein is m7GpppX diphosphatase (nhm1).